The primary structure comprises 39 residues: Phosphate starvation-inducible protein 1 (39 aa).

Its subcellular location is the cell outer membrane. The protein is Phosphate starvation-inducible protein 1 of Pseudomonas fluorescens.